Here is a 108-residue protein sequence, read N- to C-terminus: Cytochrome c (108 aa).

Heme c is bound by residues cysteine 19, cysteine 22, histidine 23, and methionine 85.

The protein belongs to the cytochrome c family. In terms of processing, binds 1 heme c group covalently per subunit.

It localises to the mitochondrion intermembrane space. Functionally, electron carrier protein. The oxidized form of the cytochrome c heme group can accept an electron from the heme group of the cytochrome c1 subunit of cytochrome reductase. Cytochrome c then transfers this electron to the cytochrome oxidase complex, the final protein carrier in the mitochondrial electron-transport chain. The chain is Cytochrome c from Stellaria longipes (Longstalk starwort).